The following is a 159-amino-acid chain: 2-C-methyl-D-erythritol 2,4-cyclodiphosphate synthase (159 aa).

Residues Asp-10 and His-12 each coordinate a divalent metal cation. Residues 10–12 and 36–37 each bind 4-CDP-2-C-methyl-D-erythritol 2-phosphate; these read DVH and HS. His-44 lines the a divalent metal cation pocket. 4-CDP-2-C-methyl-D-erythritol 2-phosphate is bound by residues 58-60, 134-137, Phe-141, and Arg-144; these read DIG and TTTE.

The protein belongs to the IspF family. Homotrimer. The cofactor is a divalent metal cation.

The catalysed reaction is 4-CDP-2-C-methyl-D-erythritol 2-phosphate = 2-C-methyl-D-erythritol 2,4-cyclic diphosphate + CMP. It functions in the pathway isoprenoid biosynthesis; isopentenyl diphosphate biosynthesis via DXP pathway; isopentenyl diphosphate from 1-deoxy-D-xylulose 5-phosphate: step 4/6. Involved in the biosynthesis of isopentenyl diphosphate (IPP) and dimethylallyl diphosphate (DMAPP), two major building blocks of isoprenoid compounds. Catalyzes the conversion of 4-diphosphocytidyl-2-C-methyl-D-erythritol 2-phosphate (CDP-ME2P) to 2-C-methyl-D-erythritol 2,4-cyclodiphosphate (ME-CPP) with a corresponding release of cytidine 5-monophosphate (CMP). In Bacteroides thetaiotaomicron (strain ATCC 29148 / DSM 2079 / JCM 5827 / CCUG 10774 / NCTC 10582 / VPI-5482 / E50), this protein is 2-C-methyl-D-erythritol 2,4-cyclodiphosphate synthase.